The sequence spans 285 residues: Nurim (285 aa).

At 1–16 (MSANVQVSGQLSSGPS) the chain is on the nuclear side. The helical transmembrane segment at 17–44 (LPACIVLSAVSLLCFVAGFGTGAEFVRF) threads the bilayer. Topologically, residues 45–74 (LSFGAIFRNISGGLDGEIPLTWSEAIRNTQ) are perinuclear space. Residues 75-96 (FQCCIGIDIGLLFLFVLQHSLM) form a helical membrane-spanning segment. The Nuclear portion of the chain corresponds to 97–113 (AWTAVKKNVLHVFGVLQ). The helical transmembrane segment at 114–130 (RSIYILCTALSLQVLMR) threads the bilayer. Residues 131–149 (FWQPCPHGPYLWNVSSDPW) are Perinuclear space-facing. Residues 150 to 180 (SAWLPLLCALVHTISWLLIFSVLLIFDYAEL) form a helical membrane-spanning segment. The Nuclear portion of the chain corresponds to 181 to 207 (MGIKQVYYFCLGMGDPLSHKSPRVARL). The helical transmembrane segment at 208-226 (YAHLRHPIYLELLLILWAV) threads the bilayer. The Perinuclear space portion of the chain corresponds to 227–232 (PCLPPD). The chain crosses the membrane as a helical span at residues 233 to 250 (RLILAIFFTLYLSLVHRL). Over 251–285 (DVQDYAYLRSQLEKKFLLFSREEASAVGGQIRKNN) the chain is Nuclear.

The protein belongs to the nurim family.

It localises to the nucleus inner membrane. The protein is Nurim (nrm) of Xenopus laevis (African clawed frog).